Consider the following 334-residue polypeptide: Protein FAM50B (334 aa).

Residue Ala-2 is modified to N-acetylalanine. Residues 122–175 (FTLDEEEGDQEDSRQAESAEAHSAGAKKNLGKNPDVDTSFLPDREREEEENRLR) are disordered. 2 stretches are compositionally biased toward basic and acidic residues: residues 132 to 141 (EDSRQAESAE) and 163 to 175 (PDREREEEENRLR).

This sequence belongs to the FAM50 family. Widely expressed. Abundant in testis, where it is expressed in seminiferous tubules, not in the interstitium. At the cellular level, expressed in primary spermatocytes and round spermatids, but not detectable in spermatogonia, elongating spermatids, mature spermatozoa, Sertoli cells or Leydig cells.

The polypeptide is Protein FAM50B (Fam50b) (Mus musculus (Mouse)).